The primary structure comprises 85 residues: Small ribosomal subunit protein bS20 (85 aa).

The protein belongs to the bacterial ribosomal protein bS20 family.

Binds directly to 16S ribosomal RNA. The chain is Small ribosomal subunit protein bS20 from Ruminiclostridium cellulolyticum (strain ATCC 35319 / DSM 5812 / JCM 6584 / H10) (Clostridium cellulolyticum).